The primary structure comprises 289 residues: MTFQIMTDSTADLSPYYIKKHHLTVLGMTVTVGEETYETIGEAALDNSTLLAAIKKGATVHTSQINSGQFLEVFKKFASADEELLYLAFSSGLSGTYQSALIAQDMVLEEFPSAKITVVDTLAAASGEGFLVEETVKLRDSGKSLTETLEVLSDIIPRLQSRFMVDDLNHLARGGRIPKAVALVGTMANIKPLLDVDPEGRLRQVTKVRGKKKAINQLLEKSLEEMDTAYPRLLISYSGTDEIAQEIKKQAMQKKGISDVDVRPLSPTIVTHTGDGTIAIFSISRKSRE.

The DegV domain occupies phenylalanine 3–serine 284. Hexadecanoate is bound by residues threonine 62 and serine 94.

May bind long-chain fatty acids, such as palmitate, and may play a role in lipid transport or fatty acid metabolism. In Lactococcus lactis subsp. lactis (strain IL1403) (Streptococcus lactis), this protein is DegV domain-containing protein YteA (yteA).